Here is a 364-residue protein sequence, read N- to C-terminus: tRNA-specific 2-thiouridylase MnmA (364 aa).

Residues 6 to 13 (AMSGGVDS) and leucine 32 each bind ATP. Cysteine 101 serves as the catalytic Nucleophile. A disulfide bond links cysteine 101 and cysteine 193. Glycine 125 lines the ATP pocket. The interaction with tRNA stretch occupies residues 143-145 (KDQ). The active-site Cysteine persulfide intermediate is the cysteine 193.

This sequence belongs to the MnmA/TRMU family.

The protein localises to the cytoplasm. The catalysed reaction is S-sulfanyl-L-cysteinyl-[protein] + uridine(34) in tRNA + AH2 + ATP = 2-thiouridine(34) in tRNA + L-cysteinyl-[protein] + A + AMP + diphosphate + H(+). Functionally, catalyzes the 2-thiolation of uridine at the wobble position (U34) of tRNA, leading to the formation of s(2)U34. The sequence is that of tRNA-specific 2-thiouridylase MnmA from Rhodococcus opacus (strain B4).